Consider the following 377-residue polypeptide: Transcription factor ast-1 (377 aa).

Residues 72–143 (PNRMLYNDNT…SNGSSSSTES (72 aa)) form a disordered region. Low complexity-rich tracts occupy residues 96-109 (STSA…TSSK) and 118-142 (TESS…SSTE). Positions 214 to 294 (TQLWQFLLEL…HGKRYAYKFD (81 aa)) form a DNA-binding region, ETS.

The protein belongs to the ETS family. As to expression, expressed in the A-neurons in the male-specific genital sensilla (simple sense organs) known as rays.

The protein resides in the nucleus. Its subcellular location is the cell projection. It localises to the neuron projection. Transcription factor. Probably binds to DNA sequences containing the consensus motif 5'-CGGA[AT][AG]-3'. Positively modulates expression of dopamine pathway genes, acting as a terminal selector for differentiation of dopaminergic neurons; may act in concert with homeobox proteins ceh-40, ceh-43 and ceh-20. Required for axon navigation in some interneurons, perhaps acting in the same pathways as basement membrane protein nid-1 and unc-6/netrin. Plays a role in the differentiation of the ventral cord pioneer neuron AVG. Required for morphogenesis of the pharynx. The chain is Transcription factor ast-1 from Caenorhabditis elegans.